A 407-amino-acid polypeptide reads, in one-letter code: Phosphopentomutase (407 aa).

Mn(2+)-binding residues include Asp10, Asp306, His311, Asp347, His348, and His359.

It belongs to the phosphopentomutase family. The cofactor is Mn(2+).

Its subcellular location is the cytoplasm. The enzyme catalyses 2-deoxy-alpha-D-ribose 1-phosphate = 2-deoxy-D-ribose 5-phosphate. The catalysed reaction is alpha-D-ribose 1-phosphate = D-ribose 5-phosphate. It functions in the pathway carbohydrate degradation; 2-deoxy-D-ribose 1-phosphate degradation; D-glyceraldehyde 3-phosphate and acetaldehyde from 2-deoxy-alpha-D-ribose 1-phosphate: step 1/2. Its function is as follows. Isomerase that catalyzes the conversion of deoxy-ribose 1-phosphate (dRib-1-P) and ribose 1-phosphate (Rib-1-P) to deoxy-ribose 5-phosphate (dRib-5-P) and ribose 5-phosphate (Rib-5-P), respectively. The sequence is that of Phosphopentomutase from Shigella dysenteriae serotype 1 (strain Sd197).